The sequence spans 95 residues: Large ribosomal subunit protein uL23 (95 aa).

Belongs to the universal ribosomal protein uL23 family. Part of the 50S ribosomal subunit. Contacts protein L29, and trigger factor when it is bound to the ribosome.

In terms of biological role, one of the early assembly proteins it binds 23S rRNA. One of the proteins that surrounds the polypeptide exit tunnel on the outside of the ribosome. Forms the main docking site for trigger factor binding to the ribosome. This is Large ribosomal subunit protein uL23 from Bacillus subtilis (strain 168).